The chain runs to 500 residues: NAD(P)H-quinone oxidoreductase chain 4, chloroplastic (500 aa).

The next 13 membrane-spanning stretches (helical) occupy residues 4 to 24, 35 to 55, 87 to 107, 134 to 154, 167 to 187, 211 to 231, 242 to 262, 272 to 292, 305 to 325, 330 to 350, 386 to 406, 416 to 436, and 462 to 482; these read FPWL…MLFL, YTIS…CYNF, IGTI…AFPV, LLLF…LLSM, FILY…GISL, ILFY…IPLH, HYST…YGLV, AHSM…IYAA, IAYS…SITD, GAIL…FLAG, LALP…GIIT, IFII…LLSM, and LFLS…PDFV.

The protein belongs to the complex I subunit 4 family.

It localises to the plastid. It is found in the chloroplast thylakoid membrane. The catalysed reaction is a plastoquinone + NADH + (n+1) H(+)(in) = a plastoquinol + NAD(+) + n H(+)(out). It carries out the reaction a plastoquinone + NADPH + (n+1) H(+)(in) = a plastoquinol + NADP(+) + n H(+)(out). This is NAD(P)H-quinone oxidoreductase chain 4, chloroplastic from Crucihimalaya wallichii (Rock-cress).